We begin with the raw amino-acid sequence, 180 residues long: uncharacterized protein (180 aa).

2 coiled-coil regions span residues 3–82 and 95–179; these read LKSL…QKIA and REYE…EKYG.

This is an uncharacterized protein from Aquifex aeolicus (strain VF5).